A 2629-amino-acid chain; its full sequence is MESADALMEEQKLMAEAKYRNYMTNIDKALRNFEYSSEWADLISALGKLSKAISSNTQYQVIPRRLKIAKRLAQCMHPALPSGVHLKALETYSVIFSKTGPERLATEFIYSAGLFPLLGYAAMNVRPALLAIYETYFVPLGDKLRPALSGFLNGVLPGYDCGLDHFERISALLKQVCNAVNPMHFYTVLWESVANNAAIRLPAITYLLEHFNKRLDMQEQIYVMGHNREIMMSALCACLNDSLILVQRNTLEFLLLGFPMHTALLAEDDLVKLVTNGLNTILRRDMSLNRRLFSWLLGSEVAKNSPTYDTLSLDASATPLDEPPEPYFVKHSRHILIRALITTLRLSLECAPMDLKPYRIMLSLLDKAEIGSAVLDYVLHDIIRAMYISSGNPEALKSANLLFATFDPAYIWSYMTNMFERACHQANSSDKQDKLLPQASAEGGDKFACEVGSGDPCVLEICVLTEFLLETVSLEMYTETTRVYLPKVFLAITQLLSLHMDRVTSSEITASLKLCMKIVSRVQPMITSPIKLNKLMEQQCAGSSSDEKITVNAAAAIDSANKGVPGTHTQGSSLEKSKSDSRLNQFAENSLQSADPNDEDLIRRSASNQSVGRQSPSKKKAKSISRLSELDKDISASDTGQQSSSDLDTPRSIKKLKAKAKVPFIRSPKKQRPKDIVLVQSAAVVDSAGNVHDAEEPKSAPPDPQSPQFYLDDESQATQQRGYSILEKCIRQYEIFFEVYVARKLLQIESDGMSESSVKVQLQRSTSIHSSSHTSSLFLVEQVLEYECPIRESQIERLFNLLRVDKVPRSKQLQRLLNHSLPLLASASELSSDSEATEAPERQTQSLLIDTQTQRGVQQLAELQLSLSMRGAVKLAASLLVEMSTFPNCNKHIVLDRSEPELPNWLKVLCLVACFAQSDKELQVSAITTLFDLISLLRSQIEHTTSPGVTFVVMLPLLKFGHVSYMEQQTRVFQLVSSILWDYLGASCTDPAQTVALLHQLHSCLESGLVETVIGNRMQAQHLLQIQPIPGVGRTALRSFQLERLGDAQLLCPTESTERLRESQARSFKKFELLWHLGRDKQTSRGFEKTLLKVLDTLALPHYMSERTFVTNWLQASLLRGDLARLTKPLYKILLSANSKRVGIVHMQQLYRESAEAEGDTAPAFERDVYAISSEQGNVKYHHMETTSGAKKKSPIRNLPKKIFGVTLSGGKTNKTSNFVSDKTALATEAAQDVNTIGLIINPLENATDFDDETDLEEPRIEIPHKETPLEQKLACAMDESDQPSAQEQPPPPSQQQQDQSSHFDQDITDNSDSSDFESDSELRETSLEKEDSITVSSSAGVSDDVKRFVGDCERVTEALTQHEKIKSRKTYRLTREKTPGENSLNSVATDQTEHSLADMHADALPADEYFREDKKLGKRKKLLTSSDKKRLSCISKTSTDSNLSNSCSQAEPAPEGDPQGEEEATAATDSTINVEDKRRNLSLETSKLQPDWQKALEKGKQNVEILRQNAAAAAAAEEQTSLRSSMKSSSSLADAAHLYHNHLLLYLAIYDTRQTLYALQTLRNIICCDKRTFLCLSITTSFSSASLKQLLVRHRKSISGKGFDGSVGNSEYAQGYRGCMQLELLVTLCLFYARGYFQRESLDAQRQSPTLQDIVNNRRIQLESIELLTLICSELIEIVKGMGRGLACYIADLLARAKLQKVMLHCLNSSVCSYGRRAPTGSYAEQVLSFNDPQDDQLHADCFQLQLLRLLLSVIRLEHEVHQLRQDTPPAAGDDSTGNTSPTRLAEGAAANVKYLPNCLISQQPMFLAAVLGALQQERLRHLHRNWTDLVTSSLNCFTFGSLTNIVISVVHQLCNNLDRMARLGLQQQRHFPPDYVLSQLEALTILCHYCLLDNTQQTALSHLFNQAYPQTSSSAQSSSTSQLLNSFVHSFLSANESSTGTSAPAPRNPQLQAARNAVLSHLPRIMSSVAAIWDSELGQLRPVRQQLMEFLSPVSLHHGCNFLAAVAVTWQQRGSSNASNGSGLSISDQFQRNSTLQACPGQLSLVSLVSSIRVMPMDSFVMTLHQVVRSPPPIHRPPAHLSIEVSALELFYFYMKSAPGTQLADAWSSLLALIRDGLNLSPPAQFALLMLLNEFVQRCPQMPFQDKKEVRELHDVTSRLVDSLSGVAGSCLEQTTWLRRNLAVKEDTDGLAKDNSIGGGGGIQQYSLQAQSVLATILSNLLDVAYGSQEKDKVVNIVTPLLYNITPYLKNHTARNVPFFYACSALLASLSGYQYTRKAWRKDMLDLLLDNSFFQMHISCLPFWRMIMDSLMTYDNTTFRELMTRVSLSQAGSLNIFTSREQEFEQRGMLLKRLAFVIYCSEFDQHNKYMPDIQEQLANSLRLVPMGPSVQAAVFLCFRVLLLRMSPDHVTSLWPIIIAEMVQVFLQMEQELKSESEERSQQMRLPSSIDVSWSNNSGASNGINAQTPMQHWRSVQLEACKLLELGCVLPATKLPHFQMYRWAFVGTEFDVHEEEVGLPNGSLENLATLPTALYVPHVRRVARLMDMKYTSQSPLLQRPSNRHLMLNFQQLQSLQELYAFFSTLGISCPQPRNFADTERDVANCLEEIEDVLANDFLEKLPSLTTPR.

7 disordered regions span residues 561–584, 605–652, 688–710, 1278–1340, 1371–1395, 1435–1471, and 1766–1785; these read NKGVPGTHTQGSSLEKSKSDSRLN, SASN…TPRS, AGNVHDAEEPKSAPPDPQSPQFY, MDES…SSSA, TYRLTREKTPGENSLNSVATDQTEH, ISKTSTDSNLSNSCSQAEPAPEGDPQGEEEATAATDS, and RQDTPPAAGDDSTGNTSPTR. Polar residues-rich tracts occupy residues 605–615 and 636–647; these read SASNQSVGRQS and ASDTGQQSSSDL. Positions 1307-1320 are enriched in acidic residues; that stretch reads DITDNSDSSDFESD. The span at 1321-1333 shows a compositional bias: basic and acidic residues; the sequence is SELRETSLEKEDS. 2 stretches are compositionally biased toward polar residues: residues 1381-1391 and 1435-1450; these read GENSLNSVATD and ISKTSTDSNLSNSCSQ.

The protein belongs to the DOP1 family.

It localises to the golgi apparatus membrane. Its function is as follows. May be involved in protein traffic between late Golgi and early endosomes. The sequence is that of Protein DOP1 homolog from Drosophila pseudoobscura pseudoobscura (Fruit fly).